A 304-amino-acid polypeptide reads, in one-letter code: Aspartate carbamoyltransferase catalytic subunit (304 aa).

Residues R54 and T55 each contribute to the carbamoyl phosphate site. K83 contacts L-aspartate. 3 residues coordinate carbamoyl phosphate: R104, H132, and Q135. R165 and R226 together coordinate L-aspartate. Positions 265 and 266 each coordinate carbamoyl phosphate.

This sequence belongs to the aspartate/ornithine carbamoyltransferase superfamily. ATCase family. In terms of assembly, heterooligomer of catalytic and regulatory chains.

The catalysed reaction is carbamoyl phosphate + L-aspartate = N-carbamoyl-L-aspartate + phosphate + H(+). It functions in the pathway pyrimidine metabolism; UMP biosynthesis via de novo pathway; (S)-dihydroorotate from bicarbonate: step 2/3. Catalyzes the condensation of carbamoyl phosphate and aspartate to form carbamoyl aspartate and inorganic phosphate, the committed step in the de novo pyrimidine nucleotide biosynthesis pathway. This chain is Aspartate carbamoyltransferase catalytic subunit, found in Pyrobaculum islandicum (strain DSM 4184 / JCM 9189 / GEO3).